The primary structure comprises 454 residues: Carbamoyl phosphate synthase arginine-specific small chain (454 aa).

The N-terminal 29 residues, 1 to 29 (MMFSRFFKAVPARAPAFSSPLPVYQARTM), are a transit peptide targeting the mitochondrion. The Glutamine amidotransferase type-1 domain maps to 219 to 406 (HVAVLDCGVK…IDSVKKYKNS (188 aa)). Cysteine 295 (nucleophile) is an active-site residue. Active-site residues include histidine 379 and glutamate 381.

The protein belongs to the CarA family. As to quaternary structure, heterodimer composed of 2 chains; the small (or glutamine) chain promotes the hydrolysis of glutamine to ammonia, which is used by the large (or ammonia) chain to synthesize carbamoyl phosphate.

Its subcellular location is the mitochondrion matrix. The enzyme catalyses hydrogencarbonate + L-glutamine + 2 ATP + H2O = carbamoyl phosphate + L-glutamate + 2 ADP + phosphate + 2 H(+). The catalysed reaction is L-glutamine + H2O = L-glutamate + NH4(+). It functions in the pathway amino-acid biosynthesis; L-arginine biosynthesis; carbamoyl phosphate from bicarbonate: step 1/1. Functionally, small subunit of the arginine-specific carbamoyl phosphate synthase (CPSase). CPSase catalyzes the formation of carbamoyl phosphate from the ammonia moiety of glutamine, carbonate, and phosphate donated by ATP, the first step of the arginine biosynthetic pathway. The small subunit (glutamine amidotransferase) binds and cleaves glutamine to supply the large subunit with the substrate ammonia. The sequence is that of Carbamoyl phosphate synthase arginine-specific small chain (cpa-1) from Emericella nidulans (strain FGSC A4 / ATCC 38163 / CBS 112.46 / NRRL 194 / M139) (Aspergillus nidulans).